Here is a 140-residue protein sequence, read N- to C-terminus: General stress protein 26 (140 aa).

The polypeptide is General stress protein 26 (ydaG) (Bacillus subtilis (strain 168)).